The chain runs to 671 residues: Zinc finger protein 568 (671 aa).

The segment at 1–31 (MERLSQMAGRRAWCAEDSVPRQEEEDRTRPS) is disordered. The span at 18 to 29 (SVPRQEEEDRTR) shows a compositional bias: basic and acidic residues. 2 KRAB domains span residues 34-105 (VTFK…RRSP) and 124-195 (LRFE…IWHP). The interval 214 to 366 (EKMAKKHTCP…QGSERPHKCK (153 aa)) is disordered. Composition is skewed to basic and acidic residues over residues 226 to 251 (EDSK…EGHL), 296 to 312 (IERE…EHAQ), and 329 to 341 (RPQE…ERKK). C2H2-type zinc fingers lie at residues 363 to 385 (HKCK…QKLH), 391 to 413 (YKCQ…HRVH), 419 to 441 (FECK…QRIH), 447 to 469 (HKCK…LLTH), 475 to 497 (FECK…QMSH), 503 to 525 (HKCK…QSVH), 531 to 553 (YKCK…QRAH), 559 to 581 (YKCK…QKVH), 587 to 609 (HKCK…ERSH), 615 to 637 (YECK…QKIH), and 643 to 665 (YKCQ…QRIH).

Belongs to the krueppel C2H2-type zinc-finger protein family. As to quaternary structure, interacts with TRIM28. As to expression, little or no expression detected in most adult tissues (brain, liver, kidney, spleen, testis, ovary). In the hippocampus, detected in neural stem cells within the subventricular zone and subgranular zone.

The protein localises to the nucleus. Has transcriptional repression activity, partially through the recruitment of the corepressor TRIM28 but also has repression activity independently of this interaction. Essential during embryonic development, where it acts as direct repressor of IGF2-P0, placental-specific transcript of IGF2, in early development and regulates convergent extension movements required for axis elongation and tissue morphogenesis in all germ layers. Also important for normal morphogenesis of extraembryonic tissues including the yolk sac, extraembryonic mesoderm and placenta. May enhance proliferation or maintenance of neural stem cells. In Mus musculus (Mouse), this protein is Zinc finger protein 568.